Reading from the N-terminus, the 748-residue chain is Catalase-peroxidase (748 aa).

Residues Trp-92–Tyr-238 constitute a cross-link (tryptophyl-tyrosyl-methioninium (Trp-Tyr) (with M-264)). His-93 acts as the Proton acceptor in catalysis. Positions Tyr-238–Met-264 form a cross-link, tryptophyl-tyrosyl-methioninium (Tyr-Met) (with W-92). His-279 serves as a coordination point for heme b.

This sequence belongs to the peroxidase family. Peroxidase/catalase subfamily. As to quaternary structure, homodimer or homotetramer. Heme b is required as a cofactor. In terms of processing, formation of the three residue Trp-Tyr-Met cross-link is important for the catalase, but not the peroxidase activity of the enzyme.

The enzyme catalyses H2O2 + AH2 = A + 2 H2O. It carries out the reaction 2 H2O2 = O2 + 2 H2O. Its function is as follows. Bifunctional enzyme with both catalase and broad-spectrum peroxidase activity. This Xanthomonas axonopodis pv. citri (strain 306) protein is Catalase-peroxidase.